A 671-amino-acid polypeptide reads, in one-letter code: UvrABC system protein B (671 aa).

One can recognise a Helicase ATP-binding domain in the interval 26–414; it reads EGLENGLAHQ…GGDIIEQVVR (389 aa). Position 39 to 46 (39 to 46) interacts with ATP; it reads GVTGSGKT. Residues 92–115 carry the Beta-hairpin motif; the sequence is YYDYYQPEAYVPSSDTFIEKDASV. The Helicase C-terminal domain occupies 431-593; that stretch reads QVDDLLSEIR…IIPQGLNKKI (163 aa). A UVR domain is found at 631–666; sequence DQKIRELEAKMYTYAQNLEFEQAAELRDQVHQLRQQ.

Belongs to the UvrB family. As to quaternary structure, forms a heterotetramer with UvrA during the search for lesions. Interacts with UvrC in an incision complex.

The protein resides in the cytoplasm. In terms of biological role, the UvrABC repair system catalyzes the recognition and processing of DNA lesions. A damage recognition complex composed of 2 UvrA and 2 UvrB subunits scans DNA for abnormalities. Upon binding of the UvrA(2)B(2) complex to a putative damaged site, the DNA wraps around one UvrB monomer. DNA wrap is dependent on ATP binding by UvrB and probably causes local melting of the DNA helix, facilitating insertion of UvrB beta-hairpin between the DNA strands. Then UvrB probes one DNA strand for the presence of a lesion. If a lesion is found the UvrA subunits dissociate and the UvrB-DNA preincision complex is formed. This complex is subsequently bound by UvrC and the second UvrB is released. If no lesion is found, the DNA wraps around the other UvrB subunit that will check the other stand for damage. This chain is UvrABC system protein B, found in Yersinia pestis.